Consider the following 158-residue polypeptide: Arginine repressor (158 aa).

This sequence belongs to the ArgR family.

The protein resides in the cytoplasm. It participates in amino-acid biosynthesis; L-arginine biosynthesis [regulation]. Its function is as follows. Regulates arginine biosynthesis genes. The polypeptide is Arginine repressor (Anaeromyxobacter sp. (strain Fw109-5)).